We begin with the raw amino-acid sequence, 138 residues long: uncharacterized protein (138 aa).

3 helical membrane passes run 12 to 32 (LHFLGFIGGIFAILGVIVLPI), 62 to 82 (LIAVPLFVLGYFISTIDFSVL), and 111 to 131 (FHWVASLPAWFITTVCALICS).

It is found in the cell membrane. This is an uncharacterized protein from Haemophilus influenzae (strain ATCC 51907 / DSM 11121 / KW20 / Rd).